The primary structure comprises 788 residues: Cadherin-10 (788 aa).

The N-terminal stretch at 1–22 (MTIHQFLLLFLFWVCLPHFCSP) is a signal peptide. The propeptide occupies 23–54 (EIMFRRTPVPQQRILSSRVPRSDGKILHRQKR). 5 consecutive Cadherin domains span residues 55–160 (GWMW…EPTF), 161–269 (PEEI…PPRF), 270–384 (PQNT…PPVF), 385–487 (SRSS…DNAP), and 488–606 (QFAV…LLLP). Residues 55–613 (GWMWNQFFLL…LLPAGLSTGA (559 aa)) lie on the Extracellular side of the membrane. The N-linked (GlcNAc...) asparagine glycan is linked to Asn256. Residues Asn438, Asn456, and Asn534 are each glycosylated (N-linked (GlcNAc...) asparagine). A helical membrane pass occupies residues 614–634 (LIAILLCIIILLVIVVLFAAL). Residues 635 to 788 (KRQRKKEPLI…YGGGESDKDS (154 aa)) lie on the Cytoplasmic side of the membrane. Phosphoserine occurs at positions 784 and 788.

In terms of tissue distribution, predominantly expressed in brain. Also found in adult and fetal kidney. Very low levels detected in prostate and fetal lung.

Its subcellular location is the cell membrane. Functionally, cadherins are calcium-dependent cell adhesion proteins. They preferentially interact with themselves in a homophilic manner in connecting cells; cadherins may thus contribute to the sorting of heterogeneous cell types. This is Cadherin-10 (CDH10) from Homo sapiens (Human).